The sequence spans 132 residues: Agouti-related protein (132 aa).

The N-terminal stretch at methionine 1–glycine 20 is a signal peptide. A propeptide spanning residues alanine 21–arginine 82 is cleaved from the precursor. Intrachain disulfides connect cysteine 87-cysteine 102, cysteine 94-cysteine 108, cysteine 101-cysteine 119, cysteine 105-cysteine 129, and cysteine 110-cysteine 117. The Agouti domain occupies cysteine 87–cysteine 129. Residues arginine 111–phenylalanine 113 form an interaction with melanocortin receptors region.

In terms of assembly, interacts with melanocortin receptors MC3R, MC4R and MC5R. As to expression, expressed primarily in the adrenal gland, subthalamic nucleus, and hypothalamus, with a lower level of expression occurring in testis, lung, and kidney.

It is found in the secreted. The protein localises to the golgi apparatus lumen. In terms of biological role, plays a role in weight homeostasis. Involved in the control of feeding behavior through the central melanocortin system. Acts as alpha melanocyte-stimulating hormone antagonist by inhibiting cAMP production mediated by stimulation of melanocortin receptors within the hypothalamus and adrenal gland. Has very low activity with MC5R. Is an inverse agonist for MC3R and MC4R being able to suppress their constitutive activity. It promotes MC3R and MC4R endocytosis in an arrestin-dependent manner. This is Agouti-related protein (AGRP) from Homo sapiens (Human).